The sequence spans 211 residues: Interleukin-6 (211 aa).

Residues 1 to 29 form the signal peptide; the sequence is MNSLSTSAFSPVAFSLGLLLVMATAFPTP. Residues C71 and C77 are joined by a disulfide bond. Position 80 is a phosphoserine (S80). C100 and C110 are disulfide-bonded.

This sequence belongs to the IL-6 superfamily. As to quaternary structure, component of a hexamer of two molecules each of IL6, IL6R and IL6ST; first binds to IL6R to associate with the signaling subunit IL6ST. Interacts with IL6R (via the N-terminal ectodomain); this interaction may be affected by IL6R-binding with SORL1, hence decreasing IL6 cis signaling. Interacts with SORL1 (via the N-terminal ectodomain); this interaction leads to IL6 internalization and lysosomal degradation. May form a trimeric complex with the soluble SORL1 ectodomain and soluble IL6R receptor; this interaction might stabilize circulating IL6, hence promoting IL6 trans signaling.

Its subcellular location is the secreted. Cytokine with a wide variety of biological functions in immunity, tissue regeneration, and metabolism. Binds to IL6R, then the complex associates to the signaling subunit IL6ST/gp130 to trigger the intracellular IL6-signaling pathway. The interaction with the membrane-bound IL6R and IL6ST stimulates 'classic signaling', whereas the binding of IL6 and soluble IL6R to IL6ST stimulates 'trans-signaling'. Alternatively, 'cluster signaling' occurs when membrane-bound IL6:IL6R complexes on transmitter cells activate IL6ST receptors on neighboring receiver cells. Its function is as follows. IL6 is a potent inducer of the acute phase response. Rapid production of IL6 contributes to host defense during infection and tissue injury, but excessive IL6 synthesis is involved in disease pathology. In the innate immune response, is synthesized by myeloid cells, such as macrophages and dendritic cells, upon recognition of pathogens through toll-like receptors (TLRs) at the site of infection or tissue injury. In the adaptive immune response, is required for the differentiation of B cells into immunoglobulin-secreting cells. Plays a major role in the differentiation of CD4(+) T cell subsets. Essential factor for the development of T follicular helper (Tfh) cells that are required for the induction of germinal-center formation. Required to drive naive CD4(+) T cells to the Th17 lineage. Also required for proliferation of myeloma cells and the survival of plasmablast cells. In terms of biological role, acts as an essential factor in bone homeostasis and on vessels directly or indirectly by induction of VEGF, resulting in increased angiogenesis activity and vascular permeability. Induces, through 'trans-signaling' and synergistically with IL1B and TNF, the production of VEGF. Involved in metabolic controls, is discharged into the bloodstream after muscle contraction increasing lipolysis and improving insulin resistance. 'Trans-signaling' in central nervous system also regulates energy and glucose homeostasis. Mediates, through GLP-1, crosstalk between insulin-sensitive tissues, intestinal L cells and pancreatic islets to adapt to changes in insulin demand. Also acts as a myokine. Plays a protective role during liver injury, being required for maintenance of tissue regeneration. Also has a pivotal role in iron metabolism by regulating HAMP/hepcidin expression upon inflammation or bacterial infection. Through activation of IL6ST-YAP-NOTCH pathway, induces inflammation-induced epithelial regeneration. The chain is Interleukin-6 (IL6) from Camelus bactrianus (Bactrian camel).